Reading from the N-terminus, the 364-residue chain is Formimidoylglutamase (364 aa).

Positions 133, 189, 191, 193, 286, and 288 each coordinate Mn(2+).

The protein belongs to the arginase family. The cofactor is Mn(2+).

It carries out the reaction N-formimidoyl-L-glutamate + H2O = formamide + L-glutamate. The protein operates within amino-acid degradation; L-histidine degradation into L-glutamate; L-glutamate from N-formimidoyl-L-glutamate (hydrolase route): step 1/1. In terms of biological role, catalyzes the conversion of N-formimidoyl-L-glutamate to L-glutamate and formamide. The sequence is that of Formimidoylglutamase from Photobacterium profundum (strain SS9).